Here is a 492-residue protein sequence, read N- to C-terminus: E1B 55 kDa protein (492 aa).

Residues 22–112 (ENMEGSQDED…ERNPSGNNSR (91 aa)) are disordered. A compositionally biased stretch (low complexity) spans 34–44 (RLLASAASGSS). Phosphoserine occurs at positions 486 and 487. Thr-491 is subject to Phosphothreonine.

This sequence belongs to the adenoviridae E1B 55 kDa protein family. In terms of assembly, interacts with host PML-4 and PML-5; this interaction promotes efficient subnuclear targeting of E1B-55K to PML nuclear bodies. Interacts with E4-ORF3 protein. Interacts with E4-ORF6 protein.

The protein localises to the host nucleus. It is found in the host cytoplasm. Plays a major role to prevent cellular inhibition of viral genome replication. Assembles an SCF-like E3 ubiquitin ligase complex based on the cellular proteins ELOB, ELOC, CUL5 and RBX1, in cooperation with viral E4orf6. This viral RING-type ligase ubiquitinates cellular substrates and targets them to proteasomal degradation: TP53/p53, LIG4, MRE11-RAD50-NBS1 (MRN) complex, ITGA3, DAXX and BLM. E1B-55K probably acts as the substrate-specific adapter of the SCF-like E3 ubiquitin ligase complex. Degradation of host TP53/p53 activity is essential for preventing E1A-induced TP53 accumulation that would otherwise lead to cell apoptosis and growth arrest. E1B-55K also inactivates TP53 transcription-factor activity by binding its transactivation domain. E1B-55K also functions as a SUMO1 E3 ligase for TP53 which causes the latter to be sequestered in promyelocytic leukemia (PML) nuclear bodies thereby contributing to maximal inhibition of TP53 function. The sequence is that of E1B 55 kDa protein from Human adenovirus B serotype 7 (HAdV-7).